The following is a 483-amino-acid chain: Regulatory protein ViaA (483 aa).

This sequence belongs to the ViaA family. Homodimer. Interacts with RavA.

The protein localises to the cytoplasm. In terms of biological role, component of the RavA-ViaA chaperone complex, which may act on the membrane to optimize the function of some of the respiratory chains. ViaA stimulates the ATPase activity of RavA. This is Regulatory protein ViaA from Escherichia coli O6:K15:H31 (strain 536 / UPEC).